We begin with the raw amino-acid sequence, 609 residues long: Dihydroxy-acid dehydratase (609 aa).

Asp81 lines the Mg(2+) pocket. Cys122 serves as a coordination point for [2Fe-2S] cluster. Mg(2+) contacts are provided by Asp123 and Lys124. N6-carboxylysine is present on Lys124. Residue Cys195 coordinates [2Fe-2S] cluster. Residue Glu491 participates in Mg(2+) binding. The active-site Proton acceptor is Ser517.

Belongs to the IlvD/Edd family. In terms of assembly, homodimer. The cofactor is [2Fe-2S] cluster. Requires Mg(2+) as cofactor.

It catalyses the reaction (2R)-2,3-dihydroxy-3-methylbutanoate = 3-methyl-2-oxobutanoate + H2O. It carries out the reaction (2R,3R)-2,3-dihydroxy-3-methylpentanoate = (S)-3-methyl-2-oxopentanoate + H2O. Its pathway is amino-acid biosynthesis; L-isoleucine biosynthesis; L-isoleucine from 2-oxobutanoate: step 3/4. The protein operates within amino-acid biosynthesis; L-valine biosynthesis; L-valine from pyruvate: step 3/4. Its function is as follows. Functions in the biosynthesis of branched-chain amino acids. Catalyzes the dehydration of (2R,3R)-2,3-dihydroxy-3-methylpentanoate (2,3-dihydroxy-3-methylvalerate) into 2-oxo-3-methylpentanoate (2-oxo-3-methylvalerate) and of (2R)-2,3-dihydroxy-3-methylbutanoate (2,3-dihydroxyisovalerate) into 2-oxo-3-methylbutanoate (2-oxoisovalerate), the penultimate precursor to L-isoleucine and L-valine, respectively. In Acinetobacter baumannii (strain AB307-0294), this protein is Dihydroxy-acid dehydratase.